The sequence spans 256 residues: Deoxyribose-phosphate aldolase (256 aa).

The active-site Proton donor/acceptor is the Asp102. The active-site Schiff-base intermediate with acetaldehyde is Lys165. Lys197 acts as the Proton donor/acceptor in catalysis.

Belongs to the DeoC/FbaB aldolase family. DeoC type 2 subfamily.

Its subcellular location is the cytoplasm. The enzyme catalyses 2-deoxy-D-ribose 5-phosphate = D-glyceraldehyde 3-phosphate + acetaldehyde. It functions in the pathway carbohydrate degradation; 2-deoxy-D-ribose 1-phosphate degradation; D-glyceraldehyde 3-phosphate and acetaldehyde from 2-deoxy-alpha-D-ribose 1-phosphate: step 2/2. Catalyzes a reversible aldol reaction between acetaldehyde and D-glyceraldehyde 3-phosphate to generate 2-deoxy-D-ribose 5-phosphate. The protein is Deoxyribose-phosphate aldolase of Shewanella sp. (strain MR-7).